The sequence spans 438 residues: Phosphoribosylamine--glycine ligase (438 aa).

The region spanning 108–316 (REFMERNNIP…LLEIAKGIVE (209 aa)) is the ATP-grasp domain. 135–194 (IDEYGKPVVVKPLGLTGGKGVKVVGYQLKDNEEAKEYAEHIIRKDGKVLIEERTDGVEFT) contributes to the ATP binding site. Residues Gln274, Glu286, and Asn288 each coordinate Mg(2+). Mn(2+)-binding residues include Gln274, Glu286, and Asn288.

This sequence belongs to the GARS family. Requires Mg(2+) as cofactor. The cofactor is Mn(2+).

The enzyme catalyses 5-phospho-beta-D-ribosylamine + glycine + ATP = N(1)-(5-phospho-beta-D-ribosyl)glycinamide + ADP + phosphate + H(+). Its pathway is purine metabolism; IMP biosynthesis via de novo pathway; N(1)-(5-phospho-D-ribosyl)glycinamide from 5-phospho-alpha-D-ribose 1-diphosphate: step 2/2. This is Phosphoribosylamine--glycine ligase from Pyrococcus horikoshii (strain ATCC 700860 / DSM 12428 / JCM 9974 / NBRC 100139 / OT-3).